Consider the following 815-residue polypeptide: DNA gyrase subunit B (815 aa).

Positions 1-21 are disordered; it reads MEKTPATGSAVAPPPVEYGTD. Residues 430 to 545 form the Toprim domain; it reads SELYIVEGDS…AISTSRSRRS (116 aa). Mg(2+) is bound by residues E436, D509, and D511.

The protein belongs to the type II topoisomerase GyrB family. As to quaternary structure, heterotetramer, composed of two GyrA and two GyrB chains. In the heterotetramer, GyrA contains the active site tyrosine that forms a transient covalent intermediate with DNA, while GyrB binds cofactors and catalyzes ATP hydrolysis. It depends on Mg(2+) as a cofactor. Requires Mn(2+) as cofactor. Ca(2+) is required as a cofactor.

Its subcellular location is the cytoplasm. It carries out the reaction ATP-dependent breakage, passage and rejoining of double-stranded DNA.. In terms of biological role, a type II topoisomerase that negatively supercoils closed circular double-stranded (ds) DNA in an ATP-dependent manner to modulate DNA topology and maintain chromosomes in an underwound state. Negative supercoiling favors strand separation, and DNA replication, transcription, recombination and repair, all of which involve strand separation. Also able to catalyze the interconversion of other topological isomers of dsDNA rings, including catenanes and knotted rings. Type II topoisomerases break and join 2 DNA strands simultaneously in an ATP-dependent manner. This is DNA gyrase subunit B from Myxococcus xanthus.